Consider the following 338-residue polypeptide: UDP-3-O-acylglucosamine N-acyltransferase (338 aa).

Catalysis depends on His-239, which acts as the Proton acceptor.

This sequence belongs to the transferase hexapeptide repeat family. LpxD subfamily. In terms of assembly, homotrimer.

The catalysed reaction is a UDP-3-O-[(3R)-3-hydroxyacyl]-alpha-D-glucosamine + a (3R)-hydroxyacyl-[ACP] = a UDP-2-N,3-O-bis[(3R)-3-hydroxyacyl]-alpha-D-glucosamine + holo-[ACP] + H(+). Its pathway is bacterial outer membrane biogenesis; LPS lipid A biosynthesis. Catalyzes the N-acylation of UDP-3-O-acylglucosamine using 3-hydroxyacyl-ACP as the acyl donor. Is involved in the biosynthesis of lipid A, a phosphorylated glycolipid that anchors the lipopolysaccharide to the outer membrane of the cell. The chain is UDP-3-O-acylglucosamine N-acyltransferase from Xylella fastidiosa (strain M23).